Reading from the N-terminus, the 637-residue chain is Early transcription factor 70 kDa subunit (637 aa).

Belongs to the helicase family. VETF subfamily. Heterodimer of a 70 kDa and a 82 kDa subunit. Part of the early transcription complex composed of ETF, RAP94/OPG109, and the DNA-directed RNA polymerase. Post-translationally, apparently non-glycosylated.

The protein localises to the virion. Its function is as follows. Acts with RNA polymerase to initiate transcription from early gene promoters. Is recruited by the RPO-associated protein of 94 kDa RAP94/OPG109 to form the early transcription complex, which also contains the core RNA polymerase. ETF heterodimer binds to early gene promoters. The protein is Early transcription factor 70 kDa subunit (OPG118) of Monkeypox virus.